The chain runs to 614 residues: Vitamin B12 transporter BtuB (614 aa).

The N-terminal stretch at 1-20 is a signal peptide; sequence MIKKASLLTACSVTAFSAWA. The TonB box motif lies at 26–33; the sequence is DTLVVTAN. Residues 38–152 form the TBDR plug domain; the sequence is PRSTVLAPTT…IGGVVNIITT (115 aa). Cyanocob(III)alamin-binding positions include Leu-83, Ser-85, Asn-92, and 110–111; that span reads VS. The TBDR beta-barrel domain occupies 155 to 614; the sequence is EPGTEISAGW…EYTLSGSYTF (460 aa). 3 beta stranded membrane-spanning segments follow: residues 158–165, 169–178, and 184–195; these read TEISAGWG, YQNYDVSTQQ, and TRVTLLGDYAHT. 4 residues coordinate Ca(2+): Asp-199, Gln-211, Asp-213, and Asp-215. Transmembrane regions (beta stranded) follow at residues 217-227 and 232-248; these read FLSKTLYGALE and DAWS…NRTN. Ca(2+)-binding residues include Tyr-249 and Asp-250. Ala-251 is a cyanocob(III)alamin binding site. Asp-261 serves as a coordination point for Ca(2+). The next 14 membrane-spanning stretches (beta stranded) occupy residues 263-277, 279-296, 309-325, 328-337, 353-369, 371-381, 385-400, 403-417, 434-443, 449-458, 473-490, 494-509, 517-529, and 535-550; these read RKLY…LRYN, ELIK…KDYN, TLDE…NNVI, HGSIGAGVDW, YDQR…QQVG, FTFEGAARSDD, FGRH…WEFI, YRFI…KAPN, KSKQWEGAFE, VNWRISGYRN, YYNE…TANF, PLTH…ARNA, RRAK…QLDW, and DWGI…YDKD. Thr-309 contributes to the cyanocob(III)alamin binding site. Residue Arg-517 coordinates cyanocob(III)alamin. Cyanocob(III)alamin is bound at residue Tyr-551. 3 consecutive transmembrane segments (beta stranded) span residues 558–572, 585–596, and 602–614; these read TVKM…LAVA, IANLFDKDYETV, and AGRE…SYTF. The TonB C-terminal box signature appears at 597–614; the sequence is YGYQTAGREYTLSGSYTF.

It belongs to the TonB-dependent receptor family. BtuB (TC 1.B.14.3.1) subfamily.

The protein localises to the cell outer membrane. Its function is as follows. Involved in the active translocation of vitamin B12 (cyanocobalamin) across the outer membrane to the periplasmic space. It derives its energy for transport by interacting with the trans-periplasmic membrane protein TonB. The chain is Vitamin B12 transporter BtuB from Escherichia coli O9:H4 (strain HS).